The following is a 1037-amino-acid chain: Ephrin type-A receptor 5 (1037 aa).

The signal sequence occupies residues 1-24 (MRGSGPRGAGRRRPPSGGGDTPIT). The interval 1–24 (MRGSGPRGAGRRRPPSGGGDTPIT) is disordered. Topologically, residues 25-573 (PASLAGCYSA…AASSDQSQIP (549 aa)) are extracellular. An Eph LBD domain is found at 60–238 (EVNLLDSRTV…YYKKCPSVVR (179 aa)). N-linked (GlcNAc...) asparagine glycans are attached at residues Asn-264, Asn-299, Asn-369, Asn-423, Asn-436, and Asn-461. Fibronectin type-III domains lie at 357–467 (PPSA…TNQA) and 468–562 (APSP…TTPV). The helical transmembrane segment at 574–594 (VIAVSVTVGVILLAVVIGVLL) threads the bilayer. The Cytoplasmic portion of the chain corresponds to 595 to 1037 (SGSCCECGCG…VQLVNGMVPL (443 aa)). Residues Tyr-650 and Tyr-656 each carry the phosphotyrosine; by autocatalysis modification. One can recognise a Protein kinase domain in the interval 675-936 (ITIERVIGAG…EIVNMLDKLI (262 aa)). ATP contacts are provided by residues 681 to 689 (IGAGEFGEV) and Lys-707. Catalysis depends on Asp-800, which acts as the Proton acceptor. 2 positions are modified to phosphotyrosine; by autocatalysis: Tyr-833 and Tyr-982. In terms of domain architecture, SAM spans 965-1029 (GAYRSVGEWL…MNSLQEMKVQ (65 aa)). A PDZ-binding motif is present at residues 1035–1037 (VPL).

It belongs to the protein kinase superfamily. Tyr protein kinase family. Ephrin receptor subfamily. In terms of assembly, heterotetramer upon binding of the ligand. The heterotetramer is composed of an ephrin dimer and a receptor dimer. Oligomerization is probably required to induce biological responses. Interacts (via SAM domain) with SAMD5 (via SAM domain). In terms of processing, phosphorylated. Phosphorylation is stimulated by the ligand EFNA5. Dephosphorylation upon stimulation by glucose, inhibits EPHA5 forward signaling and results in insulin secretion. In terms of tissue distribution, almost exclusively expressed in the nervous system in cortical neurons, cerebellar Purkinje cells and pyramidal neurons within the cortex and hippocampus. Display an increasing gradient of expression from the forebrain to hindbrain and spinal cord.

The protein resides in the cell membrane. It is found in the cell projection. It localises to the axon. Its subcellular location is the dendrite. The enzyme catalyses L-tyrosyl-[protein] + ATP = O-phospho-L-tyrosyl-[protein] + ADP + H(+). Functionally, receptor tyrosine kinase which binds promiscuously GPI-anchored ephrin-A family ligands residing on adjacent cells, leading to contact-dependent bidirectional signaling into neighboring cells. The signaling pathway downstream of the receptor is referred to as forward signaling while the signaling pathway downstream of the ephrin ligand is referred to as reverse signaling. Among GPI-anchored ephrin-A ligands, EFNA5 most probably constitutes the cognate/functional ligand for EPHA5. Functions as an axon guidance molecule during development and may be involved in the development of the retinotectal, entorhino-hippocampal and hippocamposeptal pathways. Together with EFNA5 plays also a role in synaptic plasticity in adult brain through regulation of synaptogenesis. In addition to its function in the nervous system, the interaction of EPHA5 with EFNA5 mediates communication between pancreatic islet cells to regulate glucose-stimulated insulin secretion. This Homo sapiens (Human) protein is Ephrin type-A receptor 5 (EPHA5).